Consider the following 344-residue polypeptide: tRNA N6-adenosine threonylcarbamoyltransferase (344 aa).

Fe cation is bound by residues His-111 and His-115. Substrate is bound by residues Val-133–Gly-137, Asp-166, Gly-179, Asp-183, and Asn-270. Asp-298 is a binding site for Fe cation.

It belongs to the KAE1 / TsaD family. Requires Fe(2+) as cofactor.

It localises to the cytoplasm. The enzyme catalyses L-threonylcarbamoyladenylate + adenosine(37) in tRNA = N(6)-L-threonylcarbamoyladenosine(37) in tRNA + AMP + H(+). Functionally, required for the formation of a threonylcarbamoyl group on adenosine at position 37 (t(6)A37) in tRNAs that read codons beginning with adenine. Is involved in the transfer of the threonylcarbamoyl moiety of threonylcarbamoyl-AMP (TC-AMP) to the N6 group of A37, together with TsaE and TsaB. TsaD likely plays a direct catalytic role in this reaction. The polypeptide is tRNA N6-adenosine threonylcarbamoyltransferase (Persephonella marina (strain DSM 14350 / EX-H1)).